The following is a 120-amino-acid chain: UPF0344 protein lin2366 (120 aa).

Helical transmembrane passes span 3 to 23 (GYVH…ALLI), 33 to 53 (MLQM…IMMV), 62 to 82 (ILAI…EMLL), and 92 to 112 (GMFL…GFYL).

Belongs to the UPF0344 family.

Its subcellular location is the cell membrane. The polypeptide is UPF0344 protein lin2366 (Listeria innocua serovar 6a (strain ATCC BAA-680 / CLIP 11262)).